Here is a 292-residue protein sequence, read N- to C-terminus: Ribosomal RNA small subunit methyltransferase I (292 aa).

This sequence belongs to the methyltransferase superfamily. RsmI family.

The protein localises to the cytoplasm. The catalysed reaction is cytidine(1402) in 16S rRNA + S-adenosyl-L-methionine = 2'-O-methylcytidine(1402) in 16S rRNA + S-adenosyl-L-homocysteine + H(+). Its function is as follows. Catalyzes the 2'-O-methylation of the ribose of cytidine 1402 (C1402) in 16S rRNA. The chain is Ribosomal RNA small subunit methyltransferase I from Buchnera aphidicola subsp. Baizongia pistaciae (strain Bp).